We begin with the raw amino-acid sequence, 156 residues long: Snaclec A2 (156 aa).

Residues 1 to 23 form the signal peptide; sequence MGRLISVSFGLLVVFLSLSGTGA. 3 disulfide bridges follow: C27–C38, C55–C154, and C129–C146. The region spanning 34–155 is the C-type lectin domain; sequence HEGHCYKVFN…CGQPYRFTCE (122 aa).

The protein belongs to the snaclec family. In terms of assembly, heterodimer; disulfide-linked. In terms of tissue distribution, expressed by the venom gland.

Its subcellular location is the secreted. Interferes with one step of hemostasis (modulation of platelet aggregation, or coagulation cascade, for example). This is Snaclec A2 from Macrovipera lebetinus (Levantine viper).